The sequence spans 477 residues: Aspartyl/glutamyl-tRNA(Asn/Gln) amidotransferase subunit B (477 aa).

This sequence belongs to the GatB/GatE family. GatB subfamily. In terms of assembly, heterotrimer of A, B and C subunits.

It catalyses the reaction L-glutamyl-tRNA(Gln) + L-glutamine + ATP + H2O = L-glutaminyl-tRNA(Gln) + L-glutamate + ADP + phosphate + H(+). It carries out the reaction L-aspartyl-tRNA(Asn) + L-glutamine + ATP + H2O = L-asparaginyl-tRNA(Asn) + L-glutamate + ADP + phosphate + 2 H(+). Its function is as follows. Allows the formation of correctly charged Asn-tRNA(Asn) or Gln-tRNA(Gln) through the transamidation of misacylated Asp-tRNA(Asn) or Glu-tRNA(Gln) in organisms which lack either or both of asparaginyl-tRNA or glutaminyl-tRNA synthetases. The reaction takes place in the presence of glutamine and ATP through an activated phospho-Asp-tRNA(Asn) or phospho-Glu-tRNA(Gln). The chain is Aspartyl/glutamyl-tRNA(Asn/Gln) amidotransferase subunit B from Ureaplasma parvum serovar 3 (strain ATCC 27815 / 27 / NCTC 11736).